The following is a 402-amino-acid chain: Flavohemoprotein (402 aa).

A Globin domain is found at 1 to 138 (MLSPEVRALV…LADLLIGRER (138 aa)). Residue H85 participates in heme b binding. Residues Y95 and E137 each act as charge relay system in the active site. The interval 149 to 402 (GGWTGWRAFK…AEVFGTGGVA (254 aa)) is reductase. The FAD-binding FR-type domain occupies 152–261 (TGWRAFKVVR…SPPQGDFTLD (110 aa)). FAD contacts are provided by residues Y190 and 206–209 (RQYS). 274–279 (GVGLTP) lines the NADP(+) pocket. Residue 395–398 (VFGT) participates in FAD binding.

The protein belongs to the globin family. Two-domain flavohemoproteins subfamily. This sequence in the C-terminal section; belongs to the flavoprotein pyridine nucleotide cytochrome reductase family. Heme b is required as a cofactor. FAD serves as cofactor.

It catalyses the reaction 2 nitric oxide + NADPH + 2 O2 = 2 nitrate + NADP(+) + H(+). The catalysed reaction is 2 nitric oxide + NADH + 2 O2 = 2 nitrate + NAD(+) + H(+). Functionally, is involved in NO detoxification in an aerobic process, termed nitric oxide dioxygenase (NOD) reaction that utilizes O(2) and NAD(P)H to convert NO to nitrate, which protects the bacterium from various noxious nitrogen compounds. Therefore, plays a central role in the inducible response to nitrosative stress. This Bordetella bronchiseptica (strain ATCC BAA-588 / NCTC 13252 / RB50) (Alcaligenes bronchisepticus) protein is Flavohemoprotein.